Reading from the N-terminus, the 159-residue chain is Transcriptional repressor NrdR (159 aa).

A zinc finger lies at 3 to 34; the sequence is CPFCRHDDTQVVDSRVSEDGAAIRRRRRCSAC. Residues 49–139 form the ATP-cone domain; the sequence is PAVVKKDGSR…VYRRFEDVSE (91 aa).

It belongs to the NrdR family. Requires Zn(2+) as cofactor.

In terms of biological role, negatively regulates transcription of bacterial ribonucleotide reductase nrd genes and operons by binding to NrdR-boxes. The sequence is that of Transcriptional repressor NrdR from Burkholderia pseudomallei (strain 1106a).